The sequence spans 142 residues: Hemoglobin subunit alpha (142 aa).

The 141-residue stretch at 2–142 (VLSAADKGHV…VSTVLTSKYR (141 aa)) folds into the Globin domain. Residue serine 4 is modified to Phosphoserine. An N6-succinyllysine mark is found at lysine 8 and lysine 12. Lysine 17 is subject to N6-acetyllysine; alternate. Lysine 17 carries the N6-succinyllysine; alternate modification. At tyrosine 25 the chain carries Phosphotyrosine. Serine 36 is subject to Phosphoserine. Lysine 41 carries the N6-succinyllysine modification. Residue serine 50 is modified to Phosphoserine. Residue histidine 59 participates in O2 binding. Histidine 88 lines the heme b pocket. A Phosphoserine modification is found at serine 103. Threonine 109 is subject to Phosphothreonine. Serine 125 carries the phosphoserine modification. Threonine 135 and threonine 138 each carry phosphothreonine. Serine 139 carries the post-translational modification Phosphoserine.

It belongs to the globin family. Heterotetramer of two alpha chains and two beta chains. In terms of tissue distribution, red blood cells.

Its function is as follows. Involved in oxygen transport from the lung to the various peripheral tissues. Functionally, hemopressin acts as an antagonist peptide of the cannabinoid receptor CNR1. Hemopressin-binding efficiently blocks cannabinoid receptor CNR1 and subsequent signaling. In Notamacropus eugenii (Tammar wallaby), this protein is Hemoglobin subunit alpha (HBA).